Reading from the N-terminus, the 124-residue chain is Phycocyanin PC645 alpha-3 subunit (124 aa).

Arg-71 lines the (2R,3E)-phycocyanobilin pocket. The mesobiliverdin site is built by Cys-73, Tyr-81, and Lys-97.

It belongs to the phycoerythrin family. As to quaternary structure, heterotetramer of 2 different alpha chains and 2 identical beta chains which form 2 alpha-beta heterodimers within the heterotetramer. In terms of processing, contains one phycocyanobilin chromophore and one mesobiliverdin chromophore with binding mediated by both the alpha and beta subunits.

The protein resides in the plastid. It is found in the chloroplast thylakoid membrane. Light-harvesting photosynthetic tetrapyrrole chromophore-protein from the phycobiliprotein complex. This Chroomonas sp. (strain CCMP270) protein is Phycocyanin PC645 alpha-3 subunit.